The following is a 139-amino-acid chain: D-ribose pyranase (139 aa).

Histidine 20 acts as the Proton donor in catalysis. Residues aspartate 28, histidine 106, and 128–130 (YAN) each bind substrate.

This sequence belongs to the RbsD / FucU family. RbsD subfamily. As to quaternary structure, homodecamer.

It is found in the cytoplasm. It catalyses the reaction beta-D-ribopyranose = beta-D-ribofuranose. It participates in carbohydrate metabolism; D-ribose degradation; D-ribose 5-phosphate from beta-D-ribopyranose: step 1/2. In terms of biological role, catalyzes the interconversion of beta-pyran and beta-furan forms of D-ribose. The polypeptide is D-ribose pyranase (Maridesulfovibrio salexigens (strain ATCC 14822 / DSM 2638 / NCIMB 8403 / VKM B-1763) (Desulfovibrio salexigens)).